The chain runs to 109 residues: Iron-sulfur cluster assembly protein CyaY (109 aa).

It belongs to the frataxin family.

Functionally, involved in iron-sulfur (Fe-S) cluster assembly. May act as a regulator of Fe-S biogenesis. In Verminephrobacter eiseniae (strain EF01-2), this protein is Iron-sulfur cluster assembly protein CyaY.